The primary structure comprises 557 residues: Dihydroxy-acid dehydratase (557 aa).

Cysteine 50 is a [2Fe-2S] cluster binding site. Residue aspartate 82 coordinates Mg(2+). Residue cysteine 123 coordinates [2Fe-2S] cluster. The Mg(2+) site is built by aspartate 124 and lysine 125. Lysine 125 is modified (N6-carboxylysine). [2Fe-2S] cluster is bound at residue cysteine 195. Residue glutamate 447 participates in Mg(2+) binding. The active-site Proton acceptor is the serine 473.

The protein belongs to the IlvD/Edd family. Homodimer. It depends on [2Fe-2S] cluster as a cofactor. Requires Mg(2+) as cofactor.

The enzyme catalyses (2R)-2,3-dihydroxy-3-methylbutanoate = 3-methyl-2-oxobutanoate + H2O. It catalyses the reaction (2R,3R)-2,3-dihydroxy-3-methylpentanoate = (S)-3-methyl-2-oxopentanoate + H2O. The protein operates within amino-acid biosynthesis; L-isoleucine biosynthesis; L-isoleucine from 2-oxobutanoate: step 3/4. Its pathway is amino-acid biosynthesis; L-valine biosynthesis; L-valine from pyruvate: step 3/4. In terms of biological role, functions in the biosynthesis of branched-chain amino acids. Catalyzes the dehydration of (2R,3R)-2,3-dihydroxy-3-methylpentanoate (2,3-dihydroxy-3-methylvalerate) into 2-oxo-3-methylpentanoate (2-oxo-3-methylvalerate) and of (2R)-2,3-dihydroxy-3-methylbutanoate (2,3-dihydroxyisovalerate) into 2-oxo-3-methylbutanoate (2-oxoisovalerate), the penultimate precursor to L-isoleucine and L-valine, respectively. The polypeptide is Dihydroxy-acid dehydratase (Nitrosomonas europaea (strain ATCC 19718 / CIP 103999 / KCTC 2705 / NBRC 14298)).